The chain runs to 614 residues: Vitamin B12 transporter BtuB (614 aa).

The N-terminal stretch at 1–20 (MIKKATLLTAFSVTAFSAWA) is a signal peptide. The TonB box motif lies at 26 to 33 (DTLVVTAN). The TBDR plug domain maps to 38-152 (PRSAVLAPVT…IGGVVNIITT (115 aa)). Cyanocob(III)alamin-binding positions include Ser85, Asn92, and 110–111 (VS). The 460-residue stretch at 155–614 (NPGTELTAGW…EYTLSGSYTF (460 aa)) folds into the TBDR beta-barrel domain. 3 beta stranded membrane passes run 158–165 (TELTAGWG), 169–178 (YQNYDISTQQ), and 184–195 (TRATLIGDYEYT). Ca(2+)-binding residues include Asp199, Gln211, Asp213, and Asp215. 2 consecutive transmembrane segments (beta stranded) span residues 217–227 (FLSKTLYGALE) and 232–248 (DRWS…NRTD). Positions 249 and 250 each coordinate Ca(2+). Ala251 contributes to the cyanocob(III)alamin binding site. Residue Asp261 coordinates Ca(2+). The next 14 beta stranded transmembrane spans lie at 263 to 277 (RKLY…LHFN), 279 to 296 (ERIQ…KDYN), 309 to 325 (TLDE…NSVV), 328 to 337 (HGNVGAGVDW), 353 to 369 (YDQR…QQLG), 371 to 381 (FTLEAAARSDD), 385 to 400 (FGRH…WEFI), 403 to 417 (YRFI…KAPN), 434 to 443 (KSKQWEGAFE), 449 to 458 (VSWRISGYRN), 473 to 490 (YYNE…TANF), 494 to 509 (PLTH…ARNA), 517 to 529 (RRSK…QLDW), and 535 to 550 (DWGM…YDSD). Position 309 (Thr309) interacts with cyanocob(III)alamin. Arg517 is a binding site for cyanocob(III)alamin. Tyr551 provides a ligand contact to cyanocob(III)alamin. 3 beta stranded membrane-spanning segments follow: residues 558–572 (TVKM…LTVA), 585–596 (IANLFDKDYETV), and 602–614 (AGRE…SYTF). The TonB C-terminal box motif lies at 597–614 (YGYQTAGREYTLSGSYTF).

The protein belongs to the TonB-dependent receptor family. BtuB (TC 1.B.14.3.1) subfamily.

Its subcellular location is the cell outer membrane. Functionally, involved in the active translocation of vitamin B12 (cyanocobalamin) across the outer membrane to the periplasmic space. It derives its energy for transport by interacting with the trans-periplasmic membrane protein TonB. The polypeptide is Vitamin B12 transporter BtuB (Salmonella typhimurium (strain LT2 / SGSC1412 / ATCC 700720)).